The chain runs to 181 residues: Endoribonuclease YbeY (181 aa).

Zn(2+) is bound by residues His-120, His-124, and His-130. The disordered stretch occupies residues 157-181 (AGGKRPAGGADGADGAGEPGPTAAR). Over residues 161 to 174 (RPAGGADGADGAGE) the composition is skewed to gly residues.

It belongs to the endoribonuclease YbeY family. Zn(2+) serves as cofactor.

It localises to the cytoplasm. In terms of biological role, single strand-specific metallo-endoribonuclease involved in late-stage 70S ribosome quality control and in maturation of the 3' terminus of the 16S rRNA. This is Endoribonuclease YbeY from Frankia alni (strain DSM 45986 / CECT 9034 / ACN14a).